The following is a 238-amino-acid chain: MRPSGRAADALRPITLTRQYTRHAEGSVLSAFGDTKVLCTASVLAKVPPHKKGSGEGWVTAEYGMLPRATHTRSDREAARGKQTGRTQEIQRLIGRAMRSVFDLAALGEYTIHLDCDVLQADGGTRTAAITGAFVAAHDAVSAMLRDGQIKASPIRDFVAAVSVGMVNGVPVLDLDYAEDSNCDTDMNVVMTGSGGFVEVQGTAEGTPFSRADLDAMTRLAEAGIAELVRHQKQALGL.

Residues Arg86 and 124 to 126 contribute to the phosphate site; that span reads GTR.

The protein belongs to the RNase PH family. As to quaternary structure, homohexameric ring arranged as a trimer of dimers.

It carries out the reaction tRNA(n+1) + phosphate = tRNA(n) + a ribonucleoside 5'-diphosphate. Its function is as follows. Phosphorolytic 3'-5' exoribonuclease that plays an important role in tRNA 3'-end maturation. Removes nucleotide residues following the 3'-CCA terminus of tRNAs; can also add nucleotides to the ends of RNA molecules by using nucleoside diphosphates as substrates, but this may not be physiologically important. Probably plays a role in initiation of 16S rRNA degradation (leading to ribosome degradation) during starvation. This is Ribonuclease PH from Cupriavidus metallidurans (strain ATCC 43123 / DSM 2839 / NBRC 102507 / CH34) (Ralstonia metallidurans).